Here is an 883-residue protein sequence, read N- to C-terminus: Glutamate receptor 2 (883 aa).

The N-terminal stretch at 1–24 (MQKIMHISVLLSPILWGLIFGVSS) is a signal peptide. Residues 25–543 (NSIQIGGLFP…GVFSFLDPLA (519 aa)) are Extracellular-facing. Cys78 and Cys330 are joined by a disulfide. 4 N-linked (GlcNAc...) asparagine glycosylation sites follow: Asn256, Asn370, Asn406, and Asn413. 3 residues coordinate L-glutamate: Pro499, Thr501, and Arg506. The helical transmembrane segment at 544 to 564 (YEIWMCIVFAYIGVSVVLFLV) threads the bilayer. Over 565 to 591 (SRFSPYEWHTEEFEDGRETQSSESTNE) the chain is Cytoplasmic. Residues 592–607 (FGIFNSLWFSLGAFMR) constitute an intramembrane region (helical; Pore-forming). The stretch at 608-610 (QGC) is an intramembrane region. Residue Cys610 is the site of S-palmitoyl cysteine attachment. Residues 611–616 (DISPRS) lie on the Cytoplasmic side of the membrane. The helical transmembrane segment at 617 to 637 (LSGRIVGGVWWFFTLIIISSY) threads the bilayer. Residues 638–812 (TANLAAFLTV…EKTSALSLSN (175 aa)) lie on the Extracellular side of the membrane. Positions 675 and 676 each coordinate L-glutamate. A Phosphoserine; by PKC modification is found at Ser683. Ser717 carries the phosphoserine; by PKG modification. Glu726 contacts L-glutamate. The cysteines at positions 739 and 794 are disulfide-linked. Residues 813 to 833 (VAGVFYILVGGLGLAMLVALI) form a helical membrane-spanning segment. Topologically, residues 834-883 (EFCYKSRAEAKRMKVAKNAQNINPSSSQNSQNFATYKEGYNVYGIESVKI) are cytoplasmic. A lipid anchor (S-palmitoyl cysteine) is attached at Cys836. Residues Ser860 and Ser863 each carry the phosphoserine modification. The interval 867 to 877 (ATYKEGYNVYG) is required for interaction with IQSEC1. Tyr876 is subject to Phosphotyrosine. A Phosphoserine modification is found at Ser880.

Belongs to the glutamate-gated ion channel (TC 1.A.10.1) family. GRIA2 subfamily. In terms of assembly, homotetramer or heterotetramer of pore-forming glutamate receptor subunits. Tetramers may be formed by the dimerization of dimers. May interact with MPP4. Forms a ternary complex with GRIP1 and CSPG4. Interacts with ATAD1 in an ATP-dependent manner. ATAD1-catalyzed ATP hydrolysis disrupts binding to ATAD1 and to GRIP1 and leads to AMPAR complex disassembly. Interacts with GRIP1 and GRIP2. Interacts with NSF via its C-terminus. Isoform 1, but not isoform 3, interacts with PICK1. Interacts with CACNG2. Interacts with GRIA1 and SYNDIG1. Part of a complex containing GRIA2, NSF and NAPA and/or NAPB. Interacts with SNX27 (via PDZ domain); the interaction is required for recycling to the plasma membrane when endocytosed and prevent degradation in lysosomes. Interacts with LRFN1. Found in a complex with GRIA1, GRIA3, GRIA4, CNIH2, CNIH3, CACNG2, CACNG3, CACNG4, CACNG5, CACNG7 and CACNG8. Interacts with CACNG5. Interacts with OLFM2. Interacts with AP4B1, AP4E1 and AP4M1; probably indirect it mediates the somatodendritic localization of GRIA2 in neurons. Forms a complex with GRIP1, NSG1 and STX12; controls the intracellular fate of AMPAR and the endosomal sorting of the GRIA2 subunit toward recycling and membrane targeting. Interacts with IQSEC1; the interaction is required for ARF6 activation. Interacts (heterotetramer form) with CNIH2 and CNIH3; this interaction promotes expression at the plasma membrane and extensively modulates their gating properties by slowing deactivation and desensitization kinetics. Phosphorylation at Tyr-876 is required for interaction with IQSEC1 and ARF6 activation, which in turn triggers AMPAR internalization for persistent synaptic depression. Post-translationally, palmitoylated. Depalmitoylated upon L-glutamate stimulation. ZDHHC3/GODZ specifically palmitoylates Cys-610, which leads to Golgi retention and decreased cell surface expression. In contrast, Cys-836 palmitoylation does not affect cell surface expression but regulates stimulation-dependent endocytosis. In terms of processing, N-glycosylated. Ubiquitinated by RNF167, leading to its degradation.

The protein localises to the cell membrane. The protein resides in the postsynaptic cell membrane. It localises to the postsynaptic density membrane. It carries out the reaction Ca(2+)(in) = Ca(2+)(out). It catalyses the reaction Na(+)(in) = Na(+)(out). Ionotropic glutamate receptor that functions as a ligand-gated cation channel, gated by L-glutamate and glutamatergic agonists such as alpha-amino-3-hydroxy-5-methyl-4-isoxazolepropionic acid (AMPA), quisqualic acid, and kainic acid. L-glutamate acts as an excitatory neurotransmitter at many synapses in the central nervous system and plays an important role in fast excitatory synaptic transmission. Binding of the excitatory neurotransmitter L-glutamate induces a conformation change, leading to the opening of the cation channel, and thereby converts the chemical signal to an electrical impulse upon entry of monovalent and divalent cations such as sodium and calcium. The receptor then desensitizes rapidly and enters in a transient inactive state, characterized by the presence of bound agonist. In the presence of CACNG4 or CACNG7 or CACNG8, shows resensitization which is characterized by a delayed accumulation of current flux upon continued application of L-glutamate. Through complex formation with NSG1, GRIP1 and STX12 controls the intracellular fate of AMPAR and the endosomal sorting of the GRIA2 subunit toward recycling and membrane targeting. The protein is Glutamate receptor 2 of Macaca fascicularis (Crab-eating macaque).